The sequence spans 130 residues: Flagellar assembly factor FliW (130 aa).

The protein belongs to the FliW family. In terms of assembly, interacts with translational regulator CsrA and flagellin(s).

The protein resides in the cytoplasm. In terms of biological role, acts as an anti-CsrA protein, binds CsrA and prevents it from repressing translation of its target genes, one of which is flagellin. Binds to flagellin and participates in the assembly of the flagellum. The protein is Flagellar assembly factor FliW of Clostridioides difficile (strain 630) (Peptoclostridium difficile).